The following is a 398-amino-acid chain: S-adenosylmethionine synthase (398 aa).

H15 lines the ATP pocket. Residue D17 participates in Mg(2+) binding. E43 lines the K(+) pocket. Residues E56 and Q99 each coordinate L-methionine. A flexible loop region spans residues 99–109 (QSPDIAQGVDT). ATP contacts are provided by residues 175–177 (DGK), 243–244 (RF), D252, 258–259 (RK), A275, and K279. An L-methionine-binding site is contributed by D252. An L-methionine-binding site is contributed by K283.

It belongs to the AdoMet synthase family. As to quaternary structure, homotetramer; dimer of dimers. The cofactor is Mg(2+). It depends on K(+) as a cofactor.

It localises to the cytoplasm. It catalyses the reaction L-methionine + ATP + H2O = S-adenosyl-L-methionine + phosphate + diphosphate. It participates in amino-acid biosynthesis; S-adenosyl-L-methionine biosynthesis; S-adenosyl-L-methionine from L-methionine: step 1/1. Its function is as follows. Catalyzes the formation of S-adenosylmethionine (AdoMet) from methionine and ATP. The overall synthetic reaction is composed of two sequential steps, AdoMet formation and the subsequent tripolyphosphate hydrolysis which occurs prior to release of AdoMet from the enzyme. The sequence is that of S-adenosylmethionine synthase from Parafrankia sp. (strain EAN1pec).